A 72-amino-acid polypeptide reads, in one-letter code: UPF0270 protein YheU (72 aa).

This sequence belongs to the UPF0270 family.

The chain is UPF0270 protein YheU from Salmonella dublin (strain CT_02021853).